We begin with the raw amino-acid sequence, 705 residues long: tRNA 5-methylaminomethyl-2-thiouridine biosynthesis bifunctional protein MnmC (705 aa).

Positions 1–241 (MTIKTADIQF…KREMLAGIIA (241 aa)) are tRNA (mnm(5)s(2)U34)-methyltransferase. Residues 289-705 (IGAGIAGASM…LIRQLIRREV (417 aa)) form an FAD-dependent cmnm(5)s(2)U34 oxidoreductase region.

This sequence in the N-terminal section; belongs to the methyltransferase superfamily. tRNA (mnm(5)s(2)U34)-methyltransferase family. In the C-terminal section; belongs to the DAO family. The cofactor is FAD.

The protein resides in the cytoplasm. The catalysed reaction is 5-aminomethyl-2-thiouridine(34) in tRNA + S-adenosyl-L-methionine = 5-methylaminomethyl-2-thiouridine(34) in tRNA + S-adenosyl-L-homocysteine + H(+). Its function is as follows. Catalyzes the last two steps in the biosynthesis of 5-methylaminomethyl-2-thiouridine (mnm(5)s(2)U) at the wobble position (U34) in tRNA. Catalyzes the FAD-dependent demodification of cmnm(5)s(2)U34 to nm(5)s(2)U34, followed by the transfer of a methyl group from S-adenosyl-L-methionine to nm(5)s(2)U34, to form mnm(5)s(2)U34. The chain is tRNA 5-methylaminomethyl-2-thiouridine biosynthesis bifunctional protein MnmC from Pseudoalteromonas atlantica (strain T6c / ATCC BAA-1087).